Here is a 319-residue protein sequence, read N- to C-terminus: Plastid lipid-associated protein 2, chloroplastic (319 aa).

A chloroplast-targeting transit peptide spans 1–59 (MATVQFFNQFPCKTRVQSSANSKPLSKPPSSLVPMSALTRRPSFPPGEFAVSRSDFRVR). The tract at residues 17–39 (QSSANSKPLSKPPSSLVPMSALT) is disordered. The segment covering 18–36 (SSANSKPLSKPPSSLVPMS) has biased composition (low complexity).

Belongs to the PAP/fibrillin family. As to expression, expressed almost exclusively in petals. Very weak expression in all other organs.

Its subcellular location is the plastid. The protein resides in the chloroplast. Its function is as follows. May stabilize the accumulated carotenoid structures. In Brassica campestris (Field mustard), this protein is Plastid lipid-associated protein 2, chloroplastic (PAP2).